Consider the following 482-residue polypeptide: tRNA sulfurtransferase (482 aa).

Positions 61–165 (LAIRDALTRI…DDRLLLIKGR (105 aa)) constitute a THUMP domain. ATP-binding positions include 183–184 (LI), K265, G287, and Q296. C344 and C456 are joined by a disulfide. Residues 404–482 (FGPNDVILDI…GFQNVKVYRP (79 aa)) enclose the Rhodanese domain. C456 (cysteine persulfide intermediate) is an active-site residue.

This sequence belongs to the ThiI family.

It localises to the cytoplasm. It carries out the reaction [ThiI sulfur-carrier protein]-S-sulfanyl-L-cysteine + a uridine in tRNA + 2 reduced [2Fe-2S]-[ferredoxin] + ATP + H(+) = [ThiI sulfur-carrier protein]-L-cysteine + a 4-thiouridine in tRNA + 2 oxidized [2Fe-2S]-[ferredoxin] + AMP + diphosphate. The catalysed reaction is [ThiS sulfur-carrier protein]-C-terminal Gly-Gly-AMP + S-sulfanyl-L-cysteinyl-[cysteine desulfurase] + AH2 = [ThiS sulfur-carrier protein]-C-terminal-Gly-aminoethanethioate + L-cysteinyl-[cysteine desulfurase] + A + AMP + 2 H(+). It functions in the pathway cofactor biosynthesis; thiamine diphosphate biosynthesis. In terms of biological role, catalyzes the ATP-dependent transfer of a sulfur to tRNA to produce 4-thiouridine in position 8 of tRNAs, which functions as a near-UV photosensor. Also catalyzes the transfer of sulfur to the sulfur carrier protein ThiS, forming ThiS-thiocarboxylate. This is a step in the synthesis of thiazole, in the thiamine biosynthesis pathway. The sulfur is donated as persulfide by IscS. This chain is tRNA sulfurtransferase, found in Citrobacter koseri (strain ATCC BAA-895 / CDC 4225-83 / SGSC4696).